Here is a 105-residue protein sequence, read N- to C-terminus: Small ribosomal subunit protein uS10 (105 aa).

It belongs to the universal ribosomal protein uS10 family. As to quaternary structure, part of the 30S ribosomal subunit.

In terms of biological role, involved in the binding of tRNA to the ribosomes. The polypeptide is Small ribosomal subunit protein uS10 (Oleidesulfovibrio alaskensis (strain ATCC BAA-1058 / DSM 17464 / G20) (Desulfovibrio alaskensis)).